A 127-amino-acid chain; its full sequence is Small ribosomal subunit protein uS11 (127 aa).

The protein belongs to the universal ribosomal protein uS11 family. As to quaternary structure, part of the 30S ribosomal subunit. Interacts with proteins S7 and S18. Binds to IF-3.

Functionally, located on the platform of the 30S subunit, it bridges several disparate RNA helices of the 16S rRNA. Forms part of the Shine-Dalgarno cleft in the 70S ribosome. This chain is Small ribosomal subunit protein uS11, found in Flavobacterium psychrophilum (strain ATCC 49511 / DSM 21280 / CIP 103535 / JIP02/86).